We begin with the raw amino-acid sequence, 28 residues long: M-ectatotoxin-Eb2c (28 aa).

As to expression, expressed by the venom gland.

The protein localises to the secreted. Its function is as follows. Antimicrobial peptide active against Gram-negative bacterium E.coli MH1 (MIC=3.5 uM) and P.aeruginosa PAO1 (MIC=10 uM) and against Gram-positive bacterium A.globiformis VKM Ac-1112 (MIC=1.25 uM). The sequence is that of M-ectatotoxin-Eb2c from Ectatomma brunneum (Ant).